A 545-amino-acid chain; its full sequence is MAKDIQFSEEARRSMLKGVDTLANAVKVTLGPKGRNVVLEKKFGSPLITNDGVTIAKEIELEDAFENMGAKLVAEVASKTNDIAGDGTTTATVLAQAMIREGLKNVTSGANPMGIRKGIEKATAAAVKELKAISKPIEGRESIAQVAAISSADEEVGQIIAEAMERVGNDGVITIEESKGFSTELEVVEGMQFDRGYASPYMVSDSDKMEAVLDNPYVLITDKKITNIQEVLPVLEQVVQQSRPVLIIAEDVEGEALATLVLNKLRGTFNAVAVKAPGFGDRRKAMLEDIAILTGGQVITEDLGLDLKSATIESLGRAAKVVVTKENTTIVEGAGDPEQISGRVNQLKAQVEETTSEFDKEKLQERLAKLAGGVAVLKVGAATETEMKERKLRIEDALNSTRAAVEEGIVAGGGTALVNVIKAVKAVDATGDEATGVNIVLRALEEPVRQIAHNAGLEGSIIVEKLKAEEVGVGYNAATGEYVNMVETGILDPVKVTRSALQNAASVSAMFLTTEAVIADKPEENAGGADMGGMGGMGGGMPGMM.

ATP is bound by residues 29 to 32 (TLGP), 86 to 90 (DGTTT), Gly413, 476 to 478 (NAA), and Asp492.

Belongs to the chaperonin (HSP60) family. Forms a cylinder of 14 subunits composed of two heptameric rings stacked back-to-back. Interacts with the co-chaperonin GroES.

The protein resides in the cytoplasm. The enzyme catalyses ATP + H2O + a folded polypeptide = ADP + phosphate + an unfolded polypeptide.. Its function is as follows. Together with its co-chaperonin GroES, plays an essential role in assisting protein folding. The GroEL-GroES system forms a nano-cage that allows encapsulation of the non-native substrate proteins and provides a physical environment optimized to promote and accelerate protein folding. This is Chaperonin GroEL from Shouchella clausii (strain KSM-K16) (Alkalihalobacillus clausii).